Here is a 340-residue protein sequence, read N- to C-terminus: Phenylalanine--tRNA ligase alpha subunit (340 aa).

Mg(2+) is bound at residue E254.

The protein belongs to the class-II aminoacyl-tRNA synthetase family. Phe-tRNA synthetase alpha subunit type 1 subfamily. As to quaternary structure, tetramer of two alpha and two beta subunits. Mg(2+) is required as a cofactor.

It is found in the cytoplasm. The catalysed reaction is tRNA(Phe) + L-phenylalanine + ATP = L-phenylalanyl-tRNA(Phe) + AMP + diphosphate + H(+). The protein is Phenylalanine--tRNA ligase alpha subunit of Chloroherpeton thalassium (strain ATCC 35110 / GB-78).